The following is a 316-amino-acid chain: Pantothenate kinase (316 aa).

Residue 99–106 (GSVAVGKS) coordinates ATP.

This sequence belongs to the prokaryotic pantothenate kinase family.

The protein localises to the cytoplasm. The catalysed reaction is (R)-pantothenate + ATP = (R)-4'-phosphopantothenate + ADP + H(+). It functions in the pathway cofactor biosynthesis; coenzyme A biosynthesis; CoA from (R)-pantothenate: step 1/5. The protein is Pantothenate kinase (coaA) of Pasteurella multocida (strain Pm70).